Reading from the N-terminus, the 260-residue chain is MVLIRVLANLLVLQLSYAQKSSELVIGGDECNINEHPFLVALHTARSKRFYCAGTLINQEWVLTAARCDRKNIRIILGVHSKNVPNEDEQMRVPKEKFFCLSSKTYTRWDKDIMLIRLKRPVNDSTHIAPLSLPSSPPSVGSVCRIMGWGTITTTKVTYPDVPHCADINMFDYSVCQKVYRKLPEKSRTLCAGILQGGIDSCKVDNGGPLICNGQIQGIVSWGGYPCAQPHKPALYTNVFDYTDWIQSIIAGNITATCPP.

The N-terminal stretch at 1–18 (MVLIRVLANLLVLQLSYA) is a signal peptide. Positions 19 to 24 (QKSSEL) are excised as a propeptide. The 227-residue stretch at 25–251 (VIGGDECNIN…YTDWIQSIIA (227 aa)) folds into the Peptidase S1 domain. 6 disulfide bridges follow: C31–C165, C52–C68, C100–C258, C144–C212, C176–C191, and C202–C227. N-linked (GlcNAc...) asparagine glycosylation occurs at N123. Positions 172-186 (DYSVCQKVYRKLPEK) are key residues for binding to FVIIIa. N253 is a glycosylation site (N-linked (GlcNAc...) asparagine).

It belongs to the peptidase S1 family. Snake venom subfamily. In terms of processing, N-glycosylated. The toxin exists in multiple glycoforms. Expressed by the venom gland.

It localises to the secreted. In terms of biological role, this is the first member of the serine protease family that has strong anticoagulant activity and lacks enzymatic activity. It inhibits activities of three blood coagulation complexes: (1) prothrombinase complex (composed of blood coagulation factors Va and Xa (F5 and F10)) (IC(50)=164.1 nM), (2) intrinsic tenase complex (composed of factors VIIIa and IXa (F8 and F9)), and (3) extrinsic tenase complex (composed of tissue factor and factor VIIa (F7)). The toxin also has been observed to bind prothrombin, factor FVa, non-activated and activated forms of factors FVII (F7) (FVII and FVIIa), factor FVIIIa (F8), factors FIX and FIXa (F9) and factors FX and FXa (F10). The toxin inhibits the activity of the intrinsic tenase complex mainly by competing with FIXa (F9) for binding to FVIIIa (F8). The protein is Vaa serine proteinase homolog 1 of Vipera ammodytes ammodytes (Western sand viper).